We begin with the raw amino-acid sequence, 135 residues long: Single-stranded DNA-binding protein RIM1, mitochondrial (135 aa).

The transit peptide at 1–17 (MFLRTQARFFHATTKKM) directs the protein to the mitochondrion. In terms of domain architecture, SSB spans 19–117 (FSKMSIVGRI…LVQKDINLLK (99 aa)).

As to quaternary structure, homotetramer. Interacts with PIF1.

Its subcellular location is the mitochondrion. Its function is as follows. This protein binds preferentially and cooperatively to single-stranded DNA (ssDNS). Involved in mitochondrial DNA replication. Stimulates PIF1 helicase activity. The chain is Single-stranded DNA-binding protein RIM1, mitochondrial (RIM1) from Saccharomyces cerevisiae (strain ATCC 204508 / S288c) (Baker's yeast).